The chain runs to 90 residues: Probable Fe(2+)-trafficking protein (90 aa).

The protein belongs to the Fe(2+)-trafficking protein family.

Its function is as follows. Could be a mediator in iron transactions between iron acquisition and iron-requiring processes, such as synthesis and/or repair of Fe-S clusters in biosynthetic enzymes. This Aeromonas salmonicida (strain A449) protein is Probable Fe(2+)-trafficking protein.